A 677-amino-acid polypeptide reads, in one-letter code: uncharacterized protein (677 aa).

Residues 1–87 (MGRHSKPDPE…PTGAEPIAAA (87 aa)) form a disordered region. The segment covering 17–29 (SDGHAAEQQHWED) has biased composition (basic and acidic residues). The span at 51-64 (GHYSAVGGYSASGS) shows a compositional bias: low complexity. 4 helical membrane-spanning segments follow: residues 115 to 135 (VSIGVIVALVAVVVMVAGVIL), 192 to 212 (VAVAVTSAGSDAVINGFIGKW), 313 to 333 (EAVAAASAPAGAPATAGIGAV), and 474 to 494 (ATLADTMVTASAGVAATIMLD).

It is found in the cell membrane. This is an uncharacterized protein from Mycobacterium tuberculosis (strain CDC 1551 / Oshkosh).